The sequence spans 406 residues: Zinc metalloprotease Rip1 (406 aa).

The helical transmembrane segment at Met1–His21 threads the bilayer. His21 serves as a coordination point for Zn(2+). The active site involves Glu22. His25 is a binding site for Zn(2+). Residues Pro108–Leu128 form a helical membrane-spanning segment. In terms of domain architecture, PDZ spans Val125–Val209. Asp206 contributes to the Zn(2+) binding site. Helical transmembrane passes span Asn327 to Ala349 and Leu375 to Thr395.

The protein belongs to the peptidase M50B family. The cofactor is Zn(2+).

It is found in the cell membrane. Proteolysis is inhibited by Wag31; when Wag31 is non-functional oxidative stress increases proteolysis. Its function is as follows. A probable intramembrane site-2 protease (S2P) that cleaves type-2 transmembrane proteins within their membrane-spanning domains. Degrades PbpB (PBP3, FtsI) under conditions of oxidatives stress; degradation is inhibited by Wag31-PbpB interaction. Also cleaves anti-sigma factors RskA, RslA and RslM. Site-1 proteases have not yet been identified in this organism. In terms of biological role, regulated intramembrane proteolysis (RIP) occurs when an extracytoplasmic signal (possibly oxidative stress) triggers a concerted proteolytic cascade to transmit information and elicit cellular responses. The membrane-spanning regulatory substrate protein (includes anti-sigma factors RskA, RslA, RsmA, and PbpB) is first cut extracytoplasmically (site-1 protease, S1P), then within the membrane itself (site-2 protease, S2P, this entry), while cytoplasmic proteases finish degrading the regulatory protein, liberating the effector protein (ECF sigma factors SigK, SigL and SigM). This Mycolicibacterium smegmatis (strain ATCC 700084 / mc(2)155) (Mycobacterium smegmatis) protein is Zinc metalloprotease Rip1 (rip1).